A 568-amino-acid polypeptide reads, in one-letter code: Proline--tRNA ligase (568 aa).

This sequence belongs to the class-II aminoacyl-tRNA synthetase family. ProS type 1 subfamily. Homodimer.

It is found in the cytoplasm. The catalysed reaction is tRNA(Pro) + L-proline + ATP = L-prolyl-tRNA(Pro) + AMP + diphosphate. Functionally, catalyzes the attachment of proline to tRNA(Pro) in a two-step reaction: proline is first activated by ATP to form Pro-AMP and then transferred to the acceptor end of tRNA(Pro). As ProRS can inadvertently accommodate and process non-cognate amino acids such as alanine and cysteine, to avoid such errors it has two additional distinct editing activities against alanine. One activity is designated as 'pretransfer' editing and involves the tRNA(Pro)-independent hydrolysis of activated Ala-AMP. The other activity is designated 'posttransfer' editing and involves deacylation of mischarged Ala-tRNA(Pro). The misacylated Cys-tRNA(Pro) is not edited by ProRS. This Chromobacterium violaceum (strain ATCC 12472 / DSM 30191 / JCM 1249 / CCUG 213 / NBRC 12614 / NCIMB 9131 / NCTC 9757 / MK) protein is Proline--tRNA ligase.